A 713-amino-acid chain; its full sequence is Transcription activator of gluconeogenesis CPC735_053490 (713 aa).

Positions 1–70 are disordered; it reads MTANAINGPV…NAKDPLRPRR (70 aa). A compositionally biased stretch (polar residues) spans 19–56; the sequence is GDNNKSADTTMADQGTRPESQPQGQNNGAKPQNGQTKP. Positions 77-105 form a DNA-binding region, zn(2)-C6 fungal-type; the sequence is CFACQRAHLTCGDERPCQRCIKRGIQNAC. A compositionally biased stretch (polar residues) spans 145–159; it reads PLTRNGSNSKTNFYP. Disordered stretches follow at residues 145 to 229, 274 to 318, 541 to 564, and 623 to 665; these read PLTR…ASGQ, GAGE…LFGD, GGSSGAMSGVTSRGSFTPRTGMDI, and GTTS…QRKW. A compositionally biased stretch (low complexity) spans 160-171; sequence QQQSSFNNFYQN. Positions 191 to 212 are enriched in polar residues; it reads FPSQSPVSPTFNMTANPAASGN. Residues 213-229 show a composition bias toward low complexity; that stretch reads QGLPSSLSASNSNASGQ. Polar residues-rich tracts occupy residues 295–312, 541–558, and 649–659; these read SGTYTAGSNFGESPTGQP, GGSSGAMSGVTSRGSFTP, and GASNGQSQHSL.

Belongs to the ERT1/acuK family.

It localises to the nucleus. In terms of biological role, transcription factor which regulates nonfermentable carbon utilization. Activator of gluconeogenetic genes. This Coccidioides posadasii (strain C735) (Valley fever fungus) protein is Transcription activator of gluconeogenesis CPC735_053490.